We begin with the raw amino-acid sequence, 248 residues long: Adenosylcobinamide-GDP ribazoletransferase (248 aa).

7 helical membrane passes run glutamate 24–tryptophan 44, isoleucine 70–serine 90, valine 106–leucine 126, isoleucine 134–alanine 154, threonine 157–valine 177, leucine 188–tyrosine 210, and alanine 228–isoleucine 248.

This sequence belongs to the CobS family. Mg(2+) serves as cofactor.

The protein localises to the cell membrane. The catalysed reaction is alpha-ribazole + adenosylcob(III)inamide-GDP = adenosylcob(III)alamin + GMP + H(+). It carries out the reaction alpha-ribazole 5'-phosphate + adenosylcob(III)inamide-GDP = adenosylcob(III)alamin 5'-phosphate + GMP + H(+). Its pathway is cofactor biosynthesis; adenosylcobalamin biosynthesis; adenosylcobalamin from cob(II)yrinate a,c-diamide: step 7/7. In terms of biological role, joins adenosylcobinamide-GDP and alpha-ribazole to generate adenosylcobalamin (Ado-cobalamin). Also synthesizes adenosylcobalamin 5'-phosphate from adenosylcobinamide-GDP and alpha-ribazole 5'-phosphate. The sequence is that of Adenosylcobinamide-GDP ribazoletransferase from Listeria monocytogenes serotype 4b (strain CLIP80459).